The following is a 195-amino-acid chain: Exosome complex component CSL4 (195 aa).

A Phosphoserine modification is found at Ser21. The S1 motif domain maps to 66–147 (DVGAVVTCKV…AQSNYLLTTA (82 aa)).

Belongs to the CSL4 family. As to quaternary structure, component of the RNA exosome core complex (Exo-9), composed of EXOSC1, EXOSC2, EXOSC3, EXOSC4, EXOSC5, EXOSC6, EXOSC7, EXOSC8 and EXOSC9; within the complex interacts with EXOSC6. The catalytically inactive RNA exosome core complex (Exo-9) associates with the catalytic subunit EXOSC10/RRP6. Exo-9 may associate with DIS3 to form the nucleolar exosome complex, or DIS3L to form the cytoplasmic exosome complex. Exo-9 is formed by a hexameric base ring consisting of the heterodimers EXOSC4-EXOSC9, EXOSC5-EXOSC8 and EXOSC6-EXOSC7, and a cap ring consisting of EXOSC1, EXOSC2 and EXOSC3. The RNA exosome complex associates with cofactors C1D/RRP47, MPHOSPH6/MPP6 and MTREX/MTR4. Interacts with DDX60.

It is found in the nucleus. It localises to the nucleolus. Its subcellular location is the cytoplasm. In terms of biological role, non-catalytic component of the RNA exosome complex which has 3'-&gt;5' exoribonuclease activity and participates in a multitude of cellular RNA processing and degradation events. In the nucleus, the RNA exosome complex is involved in proper maturation of stable RNA species such as rRNA, snRNA and snoRNA, in the elimination of RNA processing by-products and non-coding 'pervasive' transcripts, such as antisense RNA species and promoter-upstream transcripts (PROMPTs), and of mRNAs with processing defects, thereby limiting or excluding their export to the cytoplasm. The RNA exosome may be involved in Ig class switch recombination (CSR) and/or Ig variable region somatic hypermutation (SHM) by targeting AICDA deamination activity to transcribed dsDNA substrates. In the cytoplasm, the RNA exosome complex is involved in general mRNA turnover and specifically degrades inherently unstable mRNAs containing AU-rich elements (AREs) within their 3' untranslated regions, and in RNA surveillance pathways, preventing translation of aberrant mRNAs. It seems to be involved in degradation of histone mRNA. The catalytic inactive RNA exosome core complex of 9 subunits (Exo-9) is proposed to play a pivotal role in the binding and presentation of RNA for ribonucleolysis, and to serve as a scaffold for the association with catalytic subunits and accessory proteins or complexes. EXOSC1 as peripheral part of the Exo-9 complex stabilizes the hexameric ring of RNase PH-domain subunits through contacts with EXOSC6 and EXOSC8. The chain is Exosome complex component CSL4 (Exosc1) from Mus musculus (Mouse).